Reading from the N-terminus, the 526-residue chain is NAD(P)H-quinone oxidoreductase subunit 2 (526 aa).

The next 14 membrane-spanning stretches (helical) occupy residues 16 to 36, 43 to 63, 80 to 100, 110 to 130, 133 to 153, 168 to 188, 212 to 232, 246 to 266, 280 to 300, 308 to 328, 336 to 356, 380 to 400, 402 to 422, and 468 to 488; these read ILPE…DLIL, WTPY…YTQW, LSIA…LMSV, LGEF…LSGA, LVMI…LTGY, LLIG…LYGL, LALV…ISAV, PTPV…ALAI, WHFV…VVAL, LLAY…LANT, IFYL…VILF, LGLS…GFFG, IYLF…LGLI, and VGLI…NPLF.

The protein belongs to the complex I subunit 2 family. In terms of assembly, NDH-1 can be composed of about 15 different subunits; different subcomplexes with different compositions have been identified which probably have different functions.

The protein localises to the cellular thylakoid membrane. It carries out the reaction a plastoquinone + NADH + (n+1) H(+)(in) = a plastoquinol + NAD(+) + n H(+)(out). The enzyme catalyses a plastoquinone + NADPH + (n+1) H(+)(in) = a plastoquinol + NADP(+) + n H(+)(out). Its function is as follows. NDH-1 shuttles electrons from an unknown electron donor, via FMN and iron-sulfur (Fe-S) centers, to quinones in the respiratory and/or the photosynthetic chain. The immediate electron acceptor for the enzyme in this species is believed to be plastoquinone. Couples the redox reaction to proton translocation, and thus conserves the redox energy in a proton gradient. Cyanobacterial NDH-1 also plays a role in inorganic carbon-concentration. The protein is NAD(P)H-quinone oxidoreductase subunit 2 of Trichodesmium erythraeum (strain IMS101).